The primary structure comprises 578 residues: Potassium-transporting ATPase potassium-binding subunit (578 aa).

10 helical membrane-spanning segments follow: residues asparagine 3 to glycine 23, serine 65 to leucine 85, glycine 134 to isoleucine 154, isoleucine 175 to glycine 195, phenylalanine 261 to phenylalanine 281, alanine 293 to glutamate 313, glycine 397 to glycine 417, alanine 435 to isoleucine 455, isoleucine 503 to glycine 523, and leucine 543 to proline 563.

This sequence belongs to the KdpA family. In terms of assembly, the system is composed of three essential subunits: KdpA, KdpB and KdpC.

The protein resides in the cell membrane. In terms of biological role, part of the high-affinity ATP-driven potassium transport (or Kdp) system, which catalyzes the hydrolysis of ATP coupled with the electrogenic transport of potassium into the cytoplasm. This subunit binds the extracellular potassium ions and delivers the ions to the membrane domain of KdpB through an intramembrane tunnel. The sequence is that of Potassium-transporting ATPase potassium-binding subunit from Clostridium perfringens (strain ATCC 13124 / DSM 756 / JCM 1290 / NCIMB 6125 / NCTC 8237 / Type A).